Reading from the N-terminus, the 38-residue chain is Cytochrome b6-f complex subunit 5 (38 aa).

A helical transmembrane segment spans residues 5-25 (LVLGIVLGLIPITLAGLFVAA).

Belongs to the PetG family. The 4 large subunits of the cytochrome b6-f complex are cytochrome b6, subunit IV (17 kDa polypeptide, PetD), cytochrome f and the Rieske protein, while the 4 small subunits are PetG, PetL, PetM and PetN. The complex functions as a dimer.

It is found in the cellular thylakoid membrane. Functionally, component of the cytochrome b6-f complex, which mediates electron transfer between photosystem II (PSII) and photosystem I (PSI), cyclic electron flow around PSI, and state transitions. PetG is required for either the stability or assembly of the cytochrome b6-f complex. This chain is Cytochrome b6-f complex subunit 5, found in Microcystis aeruginosa (strain NIES-843 / IAM M-2473).